The following is a 923-amino-acid chain: Periplasmic nitrate reductase (923 aa).

Residues Met1–Ala30 constitute a signal peptide (tat-type signal). Positions Trp34–Asp90 constitute a 4Fe-4S Mo/W bis-MGD-type domain. Residues Cys41, Cys44, Cys48, and Cys76 each contribute to the [4Fe-4S] cluster site. Mo-bis(molybdopterin guanine dinucleotide) is bound by residues Lys78, Gln146, Asn171, Cys175, Trp208–Met215, Met416, Gln420, Asn526, Ser551–Asp552, Lys574, Asp601, and Thr813–Ser822. Trp889 is a substrate binding site. Mo-bis(molybdopterin guanine dinucleotide) is bound by residues Asn897 and Lys914.

The protein belongs to the prokaryotic molybdopterin-containing oxidoreductase family. NasA/NapA/NarB subfamily. In terms of assembly, component of the periplasmic nitrate reductase NapAB complex composed of NapA and NapB. [4Fe-4S] cluster is required as a cofactor. Mo-bis(molybdopterin guanine dinucleotide) serves as cofactor. Post-translationally, predicted to be exported by the Tat system. The position of the signal peptide cleavage has not been experimentally proven.

It localises to the periplasm. It carries out the reaction 2 Fe(II)-[cytochrome] + nitrate + 2 H(+) = 2 Fe(III)-[cytochrome] + nitrite + H2O. Catalytic subunit of the periplasmic nitrate reductase complex NapAB. Receives electrons from NapB and catalyzes the reduction of nitrate to nitrite. The polypeptide is Periplasmic nitrate reductase (Campylobacter jejuni subsp. jejuni serotype O:23/36 (strain 81-176)).